The primary structure comprises 341 residues: HTH-type transcriptional repressor PurR (341 aa).

One can recognise an HTH lacI-type domain in the interval 2–56 (ATIKDVAKRANVSTTTVSHVINKTRFVAEETRNAVWAAIKELHYSPSAVARSLKV). The H-T-H motif DNA-binding region spans 4–23 (IKDVAKRANVSTTTVSHVIN). A DNA-binding region spans residues 48 to 56 (SAVARSLKV). Residues Y73, R190, T192, F221, and D275 each coordinate hypoxanthine.

Homodimer.

It participates in purine metabolism; purine nucleotide biosynthesis [regulation]. Its function is as follows. Is the main repressor of the genes involved in the de novo synthesis of purine nucleotides, regulating purB, purC, purEK, purF, purHD, purL, purMN and guaBA expression. PurR is allosterically activated to bind its cognate DNA by binding the purine corepressors, hypoxanthine or guanine, thereby effecting transcription repression. This is HTH-type transcriptional repressor PurR from Escherichia coli (strain UTI89 / UPEC).